We begin with the raw amino-acid sequence, 78 residues long: Dihydrofolate reductase type 2 (78 aa).

Residues K32 and 66 to 69 (VQIY) contribute to the NADP(+) site. I68 is a substrate binding site.

In terms of assembly, homotetramer.

It carries out the reaction (6S)-5,6,7,8-tetrahydrofolate + NADP(+) = 7,8-dihydrofolate + NADPH + H(+). It functions in the pathway cofactor biosynthesis; tetrahydrofolate biosynthesis; 5,6,7,8-tetrahydrofolate from 7,8-dihydrofolate: step 1/1. Its function is as follows. Key enzyme in folate metabolism. Catalyzes an essential reaction for de novo glycine and purine synthesis, and for DNA precursor synthesis. The protein is Dihydrofolate reductase type 2 of Escherichia coli.